The primary structure comprises 762 residues: 5-methyltetrahydropteroyltriglutamate--homocysteine methyltransferase (762 aa).

Residues 17 to 20 and Lys-111 contribute to the 5-methyltetrahydropteroyltri-L-glutamate site; that span reads REWK. Residues 435–437 and Glu-488 contribute to the L-homocysteine site; that span reads IGS. Residues 435-437 and Glu-488 contribute to the L-methionine site; that span reads IGS. 5-methyltetrahydropteroyltri-L-glutamate is bound by residues 519 to 520 and Trp-565; that span reads RC. Asp-603 provides a ligand contact to L-homocysteine. Asp-603 is a binding site for L-methionine. Glu-609 serves as a coordination point for 5-methyltetrahydropteroyltri-L-glutamate. His-645, Cys-647, and Glu-669 together coordinate Zn(2+). His-698 serves as the catalytic Proton donor. Cys-730 contributes to the Zn(2+) binding site.

It belongs to the vitamin-B12 independent methionine synthase family. Requires Zn(2+) as cofactor.

The enzyme catalyses 5-methyltetrahydropteroyltri-L-glutamate + L-homocysteine = tetrahydropteroyltri-L-glutamate + L-methionine. It participates in amino-acid biosynthesis; L-methionine biosynthesis via de novo pathway; L-methionine from L-homocysteine (MetE route): step 1/1. Catalyzes the transfer of a methyl group from 5-methyltetrahydrofolate to homocysteine resulting in methionine formation. This Bacillus cereus (strain G9842) protein is 5-methyltetrahydropteroyltriglutamate--homocysteine methyltransferase.